A 352-amino-acid chain; its full sequence is Proton-activated chloride channel (352 aa).

The tract at residues 1 to 55 is disordered; that stretch reads MEAIRKELSRSYQELNEEAEPVAIDPEEAEDEEKEQEEAASAVAPDRDSDRSSPP. Topologically, residues 1–65 are cytoplasmic; it reads MEAIRKELSR…VRFSRTCLKN (65 aa). Over residues 15 to 38 the composition is skewed to acidic residues; it reads LNEEAEPVAIDPEEAEDEEKEQEE. A helical transmembrane segment spans residues 66 to 86; it reads FFSVLLILVYLLLMGVAVFLV. Topologically, residues 87 to 299 are extracellular; that stretch reads YQTITDFRDK…KDPYIQEIQD (213 aa). The chain crosses the membrane as a helical span at residues 300-320; sequence IITANPWSMIALLCSVFLVLF. Residues 321–352 are Cytoplasmic-facing; the sequence is KAADFAKLSVKWMIKVRRRHLKKRARELNHIS.

Belongs to the proton-activated chloride channel family.

Its subcellular location is the cell membrane. It catalyses the reaction chloride(in) = chloride(out). In terms of biological role, chloride channel gated by pH that facilitates the entry of chloride ions into cells upon exposure to extracellular acidic pH. The protein is Proton-activated chloride channel of Xenopus tropicalis (Western clawed frog).